Consider the following 93-residue polypeptide: Envelope small membrane protein (93 aa).

The Virion surface portion of the chain corresponds to methionine 1 to glutamate 11. The chain crosses the membrane as a helical span at residues asparagine 12–glycine 32. At arginine 33–glutamine 93 the chain is on the intravirion side.

This sequence belongs to the gammacoronaviruses E protein family. As to quaternary structure, homooligomer. Interacts with the M membrane protein in the budding compartment of the host cell, which is located between endoplasmic reticulum and the Golgi complex. The cytoplasmic tails of both proteins are important for this function. Interacts with Nucleoprotein.

The protein localises to the host Golgi apparatus membrane. Functionally, plays a central role in virus morphogenesis and assembly. Acts as a viroporin and self-assembles in host membranes forming pentameric protein-lipid pores that allow ion transport. Also plays a role in the induction of apoptosis. This chain is Envelope small membrane protein, found in Avian infectious bronchitis virus (strain Portugal/322/82) (IBV).